The chain runs to 609 residues: Protein alan shepard (609 aa).

Residues Met-1 to Leu-12 show a composition bias toward pro residues. Positions Met-1–Pro-96 are disordered. Tyr-5 carries the post-translational modification Phosphotyrosine. Residues His-13–Gln-35 are compositionally biased toward low complexity. The segment covering Gly-37–Ala-50 has biased composition (gly residues). 2 stretches are compositionally biased toward low complexity: residues Ala-51–Gln-68 and Ser-83–Ala-92. Tyr-152 and Tyr-168 each carry phosphotyrosine. Positions Pro-190–Glu-252 are disordered. Residues Ser-204–Glu-252 are compositionally biased toward low complexity. 2 consecutive RRM domains span residues Thr-257–Gln-330 and Thr-336–Gly-415. The segment at Met-583–Lys-609 is disordered.

Has a role in the perception of gravity. The protein is Protein alan shepard of Drosophila grimshawi (Hawaiian fruit fly).